The primary structure comprises 89 residues: UPF0147 protein STK_04605 (89 aa).

The protein belongs to the UPF0147 family.

This is UPF0147 protein STK_04605 from Sulfurisphaera tokodaii (strain DSM 16993 / JCM 10545 / NBRC 100140 / 7) (Sulfolobus tokodaii).